Consider the following 141-residue polypeptide: Large ribosomal subunit protein uL16 (141 aa).

The protein belongs to the universal ribosomal protein uL16 family. Part of the 50S ribosomal subunit.

Its function is as follows. Binds 23S rRNA and is also seen to make contacts with the A and possibly P site tRNAs. This chain is Large ribosomal subunit protein uL16, found in Campylobacter hominis (strain ATCC BAA-381 / DSM 21671 / CCUG 45161 / LMG 19568 / NCTC 13146 / CH001A).